A 536-amino-acid chain; its full sequence is SNW domain-containing protein 1 (536 aa).

A disordered region spans residues 1 to 46 (MALTSFLPAPTQLSQDQLEAEEKARSQRSRQTSLVSSRREPPPYGY). Ala2 carries the N-acetylalanine modification. Ser14 is modified (phosphoserine). A Glycyl lysine isopeptide (Lys-Gly) (interchain with G-Cter in SUMO2) cross-link involves residue Lys23. The interaction with PPIL1 stretch occupies residues 59-79 (GDGGAFPEIHVAQYPLDMGRK). Glycyl lysine isopeptide (Lys-Gly) (interchain with G-Cter in SUMO2) cross-links involve residues Lys81, Lys97, Lys115, Lys122, Lys141, Lys158, and Lys170. The SNW stretch occupies residues 174–339 (AQYIRYTPSQ…KARERRAGIK (166 aa)). Ser182 and Ser190 each carry phosphoserine. Lys193 is covalently cross-linked (Glycyl lysine isopeptide (Lys-Gly) (interchain with G-Cter in SUMO2)). The segment at 209–233 (PPRFKINKKIPRGPPSPPAPVMHSP) is disordered. 3 positions are modified to phosphoserine: Ser224, Ser232, and Ser234. Glycyl lysine isopeptide (Lys-Gly) (interchain with G-Cter in SUMO2) cross-links involve residues Lys240, Lys258, Lys286, Lys339, Lys344, Lys416, and Lys441. The tract at residues 311-386 (KMAQKEKEKH…RSKLQRNENR (76 aa)) is disordered. A Phosphoserine modification is found at Ser446. A Glycyl lysine isopeptide (Lys-Gly) (interchain with G-Cter in SUMO2) cross-link involves residue Lys452. Composition is skewed to basic and acidic residues over residues 470-489 (NRFV…RGRE) and 503-530 (KFLE…EHEG). The disordered stretch occupies residues 470 to 536 (NRFVPDKEFS…EHEGKKRRKE (67 aa)). A phosphoserine mark is found at Ser479 and Ser481. Residue Lys509 forms a Glycyl lysine isopeptide (Lys-Gly) (interchain with G-Cter in SUMO2) linkage.

Belongs to the SNW family. Identified in the spliceosome C complex. Associates with U4/U6-U5 tri-small nuclear ribonucleoproteins (U4/U6-U5 tri-snRNPs). Component of the minor spliceosome, which splices U12-type introns. Interacts with SKI, SMAD2,SMAD3, RBPJ, RB1, PABPN1, MAGEA1, SIRT1, FOXN3, U2AF2, DAXX and ATP1B4. Interacts with PPIL1. Interacts with VDR and RXRA; preferentially associates with VDR:RXRA heterodimers. Interacts with NCOR2. Interacts with MAML1. Interacts with NOTCH1 NICD; the interaction involves multimerized NOTCH1 NICD. Forms a complex with NOTCH1 NICD and MAML1; the association is dissociated by RBPJ. Associates with positive transcription elongation factor b (P-TEFb). Component of the SNARP complex which consists at least of SNIP1, SNW1, THRAP3, BCLAF1 and PNN. As to quaternary structure, (Microbial infection) Interacts with human papillomavirus type-16 (HPV16) E7 protein. In terms of assembly, (Microbial infection) Interacts with EBV EBNA2; EBNA2 competes with NCOR2 for interaction with SNW1.

The protein localises to the nucleus. Its function is as follows. Involved in pre-mRNA splicing as component of the spliceosome. As a component of the minor spliceosome, involved in the splicing of U12-type introns in pre-mRNAs. Required for the specific splicing of CDKN1A pre-mRNA; the function probably involves the recruitment of U2AF2 to the mRNA. May recruit PPIL1 to the spliceosome. May be involved in cyclin-D1/CCND1 mRNA stability through the SNARP complex which associates with both the 3'end of the CCND1 gene and its mRNA. Involved in transcriptional regulation. Modulates TGF-beta-mediated transcription via association with SMAD proteins, MYOD1-mediated transcription via association with PABPN1, RB1-mediated transcriptional repression, and retinoid-X receptor (RXR)- and vitamin D receptor (VDR)-dependent gene transcription in a cell line-specific manner probably involving coactivators NCOA1 and GRIP1. Is involved in NOTCH1-mediated transcriptional activation. Binds to multimerized forms of Notch intracellular domain (NICD) and is proposed to recruit transcriptional coactivators such as MAML1 to form an intermediate preactivation complex which associates with DNA-bound CBF-1/RBPJ to form a transcriptional activation complex by releasing SNW1 and redundant NOTCH1 NICD. In terms of biological role, (Microbial infection) Is recruited by HIV-1 Tat to Tat:P-TEFb:TAR RNA complexes and is involved in Tat transcription by recruitment of MYC, MEN1 and TRRAP to the HIV promoter. (Microbial infection) Proposed to be involved in transcriptional activation by EBV EBNA2 of CBF-1/RBPJ-repressed promoters. The chain is SNW domain-containing protein 1 (SNW1) from Homo sapiens (Human).